The following is a 374-amino-acid chain: CMP-N-acetylneuraminate-beta-1,4-galactoside alpha-2,3-sialyltransferase (374 aa).

The Cytoplasmic portion of the chain corresponds to 1-8 (MGLLVFVR). Residues 9–28 (NLLLALCLFLVLGFLYYSAW) form a helical; Signal-anchor for type II membrane protein membrane-spanning segment. The Lumenal portion of the chain corresponds to 29–374 (KLHLLQWEDS…RVITDLSSGI (346 aa)). N-linked (GlcNAc...) asparagine glycans are attached at residues Asn79 and Asn170. Residues Cys159 and Cys313 are joined by a disulfide bond.

It belongs to the glycosyltransferase 29 family. Found in all tissues tested. High expression found in brain, liver, kidney, colon, heart and spleen.

It localises to the membrane. It is found in the golgi apparatus. Its subcellular location is the golgi stack membrane. The enzyme catalyses a beta-D-galactosyl-(1-&gt;4)-N-acetyl-beta-D-glucosaminyl derivative + CMP-N-acetyl-beta-neuraminate = an N-acetyl-alpha-neuraminyl-(2-&gt;3)-beta-D-galactosyl-(1-&gt;4)-N-acetyl-beta-D-glucosaminyl derivative + CMP + H(+). It participates in protein modification; protein glycosylation. Catalyzes the formation of the NeuAc-alpha-2,3-Gal-beta-1,4-GlcNAc-, NeuAc-alpha-2,3-Gal-beta-1,3-GlcNAc- and NeuAc-alpha-2,3-Gal-beta-1,3-GalNAc- sequences found in terminal carbohydrate groups of glycoproteins and glycolipids. The highest activity is toward Gal-beta-1,3-GlcNAc and the lowest toward Gal-beta-1,3-GalNAc. In Mus musculus (Mouse), this protein is CMP-N-acetylneuraminate-beta-1,4-galactoside alpha-2,3-sialyltransferase (St3gal3).